A 206-amino-acid polypeptide reads, in one-letter code: Peptidyl-tRNA hydrolase (206 aa).

Position 14 (Y14) interacts with tRNA. H19 functions as the Proton acceptor in the catalytic mechanism. Residues F64 and N66 each contribute to the tRNA site. The segment at 185 to 206 (VNGEAPKKSKDQAKEPANEQPR) is disordered. Over residues 189–206 (APKKSKDQAKEPANEQPR) the composition is skewed to basic and acidic residues.

It belongs to the PTH family. In terms of assembly, monomer.

The protein localises to the cytoplasm. It catalyses the reaction an N-acyl-L-alpha-aminoacyl-tRNA + H2O = an N-acyl-L-amino acid + a tRNA + H(+). Hydrolyzes ribosome-free peptidyl-tRNAs (with 1 or more amino acids incorporated), which drop off the ribosome during protein synthesis, or as a result of ribosome stalling. In terms of biological role, catalyzes the release of premature peptidyl moieties from peptidyl-tRNA molecules trapped in stalled 50S ribosomal subunits, and thus maintains levels of free tRNAs and 50S ribosomes. The polypeptide is Peptidyl-tRNA hydrolase (Herpetosiphon aurantiacus (strain ATCC 23779 / DSM 785 / 114-95)).